The chain runs to 215 residues: 7-methyl-GTP pyrophosphatase (215 aa).

The Proton acceptor role is filled by Asp79.

This sequence belongs to the Maf family. YceF subfamily. Requires a divalent metal cation as cofactor.

It is found in the cytoplasm. The enzyme catalyses N(7)-methyl-GTP + H2O = N(7)-methyl-GMP + diphosphate + H(+). In terms of biological role, nucleoside triphosphate pyrophosphatase that hydrolyzes 7-methyl-GTP (m(7)GTP). May have a dual role in cell division arrest and in preventing the incorporation of modified nucleotides into cellular nucleic acids. The protein is 7-methyl-GTP pyrophosphatase of Burkholderia mallei (strain ATCC 23344).